Here is a 258-residue protein sequence, read N- to C-terminus: Spindlin-3 (258 aa).

A disordered region spans residues 1 to 23 (MKTPFGKAAAGQRSRTGAGHGSV). Tudor-like domain regions lie at residues 50 to 99 (VGCR…LELH), 129 to 178 (VGKA…YQLL), and 210 to 255 (VGKQ…YDLV). Histone H3K4me3 and H3R8me2a binding regions lie at residues glutamate 138 and 246-248 (DFH).

This sequence belongs to the SPIN/STSY family. Interacts with C11orf84/SPINDOC.

Its function is as follows. Exhibits H3K4me3-binding activity. In Homo sapiens (Human), this protein is Spindlin-3 (SPIN3).